A 99-amino-acid chain; its full sequence is Virion membrane protein OPG135 (99 aa).

The first 22 residues, 1-22 (MSCYTAILKSVGGLALFQVANG), serve as a signal peptide directing secretion. The Intravirion segment spans residues 23–45 (AIDLCRHFFMYFCEQKLRPNSFW). The helical transmembrane segment at 46–66 (FVVVRAIASMIMYLVLGIALL) threads the bilayer. Over 67–83 (YISEQDDKKNTNNDGSN) the chain is Virion surface. A compositionally biased stretch (basic and acidic residues) spans 73–89 (DKKNTNNDGSNNDKRNE). The interval 73–99 (DKKNTNNDGSNNDKRNESSINSNSSPK) is disordered. N88 carries an N-linked (GlcNAc...) asparagine; by host glycan. Residues 90 to 99 (SSINSNSSPK) show a composition bias toward polar residues.

The protein belongs to the oerthopoxvirus OPG135 family.

Its subcellular location is the virion membrane. It is found in the host cytoplasm. Its function is as follows. Envelope protein. Required for an early step in virion morphogenesis. This chain is Virion membrane protein OPG135 (OPG135), found in Homo sapiens (Human).